A 408-amino-acid polypeptide reads, in one-letter code: CinA-like protein (408 aa).

Belongs to the CinA family.

The protein is CinA-like protein of Anaeromyxobacter dehalogenans (strain 2CP-C).